Reading from the N-terminus, the 301-residue chain is uncharacterized protein (301 aa).

Glu-146, Glu-148, and Asp-177 together coordinate a divalent metal cation.

The protein belongs to the FAH family.

This is an uncharacterized protein from Staphylococcus epidermidis (strain ATCC 12228 / FDA PCI 1200).